We begin with the raw amino-acid sequence, 754 residues long: MSSNQIYSAKYSGVDVYEFIHPTGSIMKRKADNWVNATHILKAAKFPKAKRTRILEKEVITDTHEKVQGGFGKYQGTWIPLELASKLAEKFEVLDELKPLFDFTQQEGSASPPQAPKHHHASRSDSTRKKATKSASVPSGKVSEKASSQQQQPVSQQQQQQPGSAPKRRGRPPRNKATVTLQRSQSEMVFPKPSIPSSSIQSTKLPSLQPQFGRSATSLSPIMDVKSPLDQASPQFKELDIEDGLSSDVEPNSIMGTKHEDNTHLMNTKDEPVSSSSSLPSSPSEFSQSVAFGSRSNMQTPLQLNGTTSMNMILPKFSSSQNGPSDSNQRANEYLSKLVNYFISNDTQNESEIPMELLNPPLHCSPFIDTWIDPEHHTAFHWACAMGTLPIVEALLKAGSSIRSLNNVGETPLIRSSIFHNCYTKRTYPQIFEILKDTVFDLDAKSRNVIHRIVSRKSHTPSAVYYLDVVLSKIKDFTPQYRIDVLINQQDNDGNSPLHYAATNKDDQFYQLLLQNGALTTVQNNSGMTPNGIISGRYSMDEITKGQRLDDPYEFNKMYPSQAATRTNRIIPEVINMMKEMANSYQNAYQKRQNEVLQMERTVKSMKKTITSVEMKLLEALNLKETDNVDIVLNDRKEKIDELQRRIATDKRVLINRLEEGQVKLIRKFVDEETKNVEGKTTDGEESEDIEALLKELVLIQLKRKRKLNQIIDVITDNSKVYKYRKMISQGTDIDVSDVDECLDVIYQTLSKEG.

One can recognise an HTH APSES-type domain in the interval 6–112; that stretch reads IYSAKYSGVD…FTQQEGSASP (107 aa). The H-T-H motif DNA-binding region spans 37–58; it reads ATHILKAAKFPKAKRTRILEKE. Disordered stretches follow at residues 105–215 and 239–301; these read QQEG…FGRS and LDIE…MQTP. The span at 147–162 shows a compositional bias: low complexity; the sequence is SSQQQQPVSQQQQQQP. Polar residues-rich tracts occupy residues 177 to 187 and 203 to 215; these read ATVTLQRSQSE and TKLP…FGRS. Residues 257–272 are compositionally biased toward basic and acidic residues; the sequence is TKHEDNTHLMNTKDEP. Low complexity predominate over residues 273–289; the sequence is VSSSSSLPSSPSEFSQS. Polar residues predominate over residues 290–301; it reads VAFGSRSNMQTP. 2 ANK repeats span residues 375 to 404 and 493 to 522; these read EHHT…SIRS and DGNS…LTTV.

MBF contains SWI6 and MBP1.

Its subcellular location is the nucleus. In terms of biological role, binds to MCB elements (Mlu I cell cycle box) found in the promoter of most DNA synthesis genes. Transcriptional activation by MBF has an important role in the transition from G1 to S phase. It may have a dual role in that it behaves as an activator of transcription at the G1-S boundary and as a repressor during other stages of the cell cycle. The sequence is that of Transcription factor MBP1 (MBP1) from Kluyveromyces lactis (strain ATCC 8585 / CBS 2359 / DSM 70799 / NBRC 1267 / NRRL Y-1140 / WM37) (Yeast).